The sequence spans 65 residues: Large ribosomal subunit protein bL35 (65 aa).

Belongs to the bacterial ribosomal protein bL35 family.

The polypeptide is Large ribosomal subunit protein bL35 (Acetivibrio thermocellus (strain ATCC 27405 / DSM 1237 / JCM 9322 / NBRC 103400 / NCIMB 10682 / NRRL B-4536 / VPI 7372) (Clostridium thermocellum)).